Here is a 146-residue protein sequence, read N- to C-terminus: Aminoglycoside N(6')-acetyltransferase type 1 (146 aa).

Residues 1–146 (MIVICDHDNL…RVVFYRKTLG (146 aa)) enclose the N-acetyltransferase domain. The substrate site is built by Trp21, Tyr66, Glu79, and Asp115. Asn120 is a binding site for acetyl-CoA. Glu136 serves as a coordination point for substrate.

In terms of assembly, homodimer.

The enzyme catalyses kanamycin B + acetyl-CoA = N(6')-acetylkanamycin B + CoA + H(+). Its function is as follows. Catalyzes the transfer of an acetyl group from acetyl-CoA to the 6'-amino group of aminoglycoside molecules conferring resistance to antibiotics containing the purpurosamine ring including amikacin, tobramycin, netilmicin, isepamicin and sisomicin. The polypeptide is Aminoglycoside N(6')-acetyltransferase type 1 (Serratia marcescens).